The sequence spans 276 residues: Formamidopyrimidine-DNA glycosylase (276 aa).

P2 serves as the catalytic Schiff-base intermediate with DNA. E3 (proton donor) is an active-site residue. The active-site Proton donor; for beta-elimination activity is the K58. DNA contacts are provided by H94, R112, and R157. Residues 242–276 (FVYDRAGEPCRVCGAPIRQIVQGQRSTYFCPNCQR) form an FPG-type zinc finger. The active-site Proton donor; for delta-elimination activity is R266.

This sequence belongs to the FPG family. Monomer. Zn(2+) serves as cofactor.

The enzyme catalyses Hydrolysis of DNA containing ring-opened 7-methylguanine residues, releasing 2,6-diamino-4-hydroxy-5-(N-methyl)formamidopyrimidine.. It catalyses the reaction 2'-deoxyribonucleotide-(2'-deoxyribose 5'-phosphate)-2'-deoxyribonucleotide-DNA = a 3'-end 2'-deoxyribonucleotide-(2,3-dehydro-2,3-deoxyribose 5'-phosphate)-DNA + a 5'-end 5'-phospho-2'-deoxyribonucleoside-DNA + H(+). Its function is as follows. Involved in base excision repair of DNA damaged by oxidation or by mutagenic agents. Acts as a DNA glycosylase that recognizes and removes damaged bases. Has a preference for oxidized purines, such as 7,8-dihydro-8-oxoguanine (8-oxoG). Has AP (apurinic/apyrimidinic) lyase activity and introduces nicks in the DNA strand. Cleaves the DNA backbone by beta-delta elimination to generate a single-strand break at the site of the removed base with both 3'- and 5'-phosphates. The protein is Formamidopyrimidine-DNA glycosylase of Burkholderia pseudomallei (strain 1710b).